Consider the following 217-residue polypeptide: Probable rhamnogalacturonan acetylesterase YesY (217 aa).

Residue serine 11 is the Nucleophile of the active site. Active-site residues include glutamate 178 and histidine 185.

Belongs to the 'GDSL' lipolytic enzyme family.

In terms of biological role, may play a role in the degradation of rhamnogalacturonan derived from plant cell walls. Probably has broad substrate specificity and may degrade several types of acetylated substrates. The sequence is that of Probable rhamnogalacturonan acetylesterase YesY (yesY) from Bacillus subtilis (strain 168).